The sequence spans 167 residues: Ribosome maturation factor RimM (167 aa).

The region spanning 94–165 is the PRC barrel domain; that stretch reads EHEYYYSDII…TIKITPMEGL (72 aa).

This sequence belongs to the RimM family. In terms of assembly, binds ribosomal protein uS19.

The protein resides in the cytoplasm. Its function is as follows. An accessory protein needed during the final step in the assembly of 30S ribosomal subunit, possibly for assembly of the head region. Essential for efficient processing of 16S rRNA. May be needed both before and after RbfA during the maturation of 16S rRNA. It has affinity for free ribosomal 30S subunits but not for 70S ribosomes. The polypeptide is Ribosome maturation factor RimM (Staphylococcus epidermidis (strain ATCC 12228 / FDA PCI 1200)).